The sequence spans 139 residues: Immunogenic miracidial antigen 8I' (139 aa).

Residues 61–139 (IDVGDEDYHD…PKKYGSGYKH (79 aa)) form a disordered region. The segment covering 64-85 (GDEDYHDGDDDVDYTDDVDDVD) has biased composition (acidic residues). Residues 90–103 (SPSQLLQGGYQRNQ) show a composition bias toward polar residues.

It belongs to the immunogenic miracidial antigen family.

This chain is Immunogenic miracidial antigen 8I' (8I'), found in Schistosoma japonicum (Blood fluke).